A 514-amino-acid polypeptide reads, in one-letter code: UDP-N-acetylmuramyl-tripeptide synthetase (514 aa).

2 residues coordinate UDP-N-acetyl-alpha-D-muramoyl-L-alanyl-D-glutamate: Leu44 and Ser46. Gly129–Ser135 is a binding site for ATP. Residues Thr171–Thr172, Ser198, and Arg206 each bind UDP-N-acetyl-alpha-D-muramoyl-L-alanyl-D-glutamate. At Lys238 the chain carries N6-carboxylysine.

Belongs to the MurCDEF family. MurE subfamily. Post-translationally, carboxylation is probably crucial for Mg(2+) binding and, consequently, for the gamma-phosphate positioning of ATP.

It is found in the cytoplasm. It functions in the pathway cell wall biogenesis; peptidoglycan biosynthesis. Catalyzes the addition of an amino acid to the nucleotide precursor UDP-N-acetylmuramoyl-L-alanyl-D-glutamate (UMAG) in the biosynthesis of bacterial cell-wall peptidoglycan. This is UDP-N-acetylmuramyl-tripeptide synthetase from Leifsonia xyli subsp. xyli (strain CTCB07).